Consider the following 280-residue polypeptide: Bifunctional protein FolD (280 aa).

Residues 159–161 (GRS), Ser184, and Ile225 contribute to the NADP(+) site.

This sequence belongs to the tetrahydrofolate dehydrogenase/cyclohydrolase family. Homodimer.

It carries out the reaction (6R)-5,10-methylene-5,6,7,8-tetrahydrofolate + NADP(+) = (6R)-5,10-methenyltetrahydrofolate + NADPH. It catalyses the reaction (6R)-5,10-methenyltetrahydrofolate + H2O = (6R)-10-formyltetrahydrofolate + H(+). It functions in the pathway one-carbon metabolism; tetrahydrofolate interconversion. Catalyzes the oxidation of 5,10-methylenetetrahydrofolate to 5,10-methenyltetrahydrofolate and then the hydrolysis of 5,10-methenyltetrahydrofolate to 10-formyltetrahydrofolate. This chain is Bifunctional protein FolD, found in Methanosphaerula palustris (strain ATCC BAA-1556 / DSM 19958 / E1-9c).